The following is a 579-amino-acid chain: DELLA protein GAIP (579 aa).

The segment at 1 to 25 is disordered; sequence MKREHHYLHPRPEPPSVATGSNRES. Residues 46-50 carry the DELLA motif motif; sequence DELLA. The region spanning 202-570 is the GRAS domain; that stretch reads VDSQENGIQL…RPLIATSAWK (369 aa). A leucine repeat I (LRI) region spans residues 209–263; that stretch reads IQLVHALMVCAEAVQQNNLNLAEALVKRIDYLAVSQAGAMRKVATFFAEALARRI. The tract at residues 281–346 is VHIID; that stretch reads QMHFYESCPY…SGPPTFRLTG (66 aa). A VHIID motif is present at residues 312-316; it reads VHVID. A leucine repeat II (LRII) region spans residues 360 to 392; sequence DVGWKLVKFAETLHVEFEYRGFVANSLADLDAS. The PFYRE stretch occupies residues 404–491; that stretch reads VVVNSVFELH…EMYLGKQICN (88 aa). Positions 412–416 match the LXXLL motif motif; it reads LHQLL. The interval 494–570 is SAW; the sequence is ACEGADRVER…RPLIATSAWK (77 aa).

It belongs to the GRAS family. DELLA subfamily. In terms of processing, phosphorylated. Post-translationally, ubiquitinated. Upon GA application it is ubiquitinated, leading to its subsequent degradation.

Its subcellular location is the nucleus. In terms of biological role, probable transcriptional regulator that acts as a repressor of the gibberellin (GA) signaling pathway. Probably acts by participating in large multiprotein complexes that represses transcription of GA-inducible genes. Upon GA application, it is degraded by the proteasome, allowing the GA signaling pathway. The polypeptide is DELLA protein GAIP (GAIP) (Cucurbita maxima (Pumpkin)).